The following is a 24-amino-acid chain: Lantibiotic 107891 (24 aa).

The residue at position 2 (T2) is a (E)-2,3-didehydrobutyrine. Residues 3 to 7 (SWSLC) constitute a cross-link (lanthionine (Ser-Cys)). W4 bears the 6'-chlorotryptophan mark. Residue S5 is modified to 2,3-didehydroalanine (Ser). The segment at residues 8-11 (TPGC) is a cross-link (beta-methyllanthionine (Thr-Cys)). 2 cross-links (lanthionine (Ser-Cys)) span residues 13–20 (SPGGGSNC) and 18–23 (SNCSFC). P14 bears the 3,4-dihydroxyproline; in form A1 mark. P14 bears the 4-hydroxyproline; in form A2 mark. Positions 21–24 (SFCC) form a cross-link, S-(2-aminovinyl)-D-cysteine (Ser-Cys).

The protein belongs to the type A lantibiotic family. In terms of processing, maturation of lantibiotics involves the enzymatic conversion of Thr, and Ser into dehydrated AA and the formation of thioether bonds with cysteine. The C-terminal lanthionine undergoes decarboxylation. This is followed by membrane translocation and cleavage of the modified precursor. Occurs in 2 forms, A1 contains 3,4-dihydroxyproline at Pro-14, A2 contains 4-hydroxyproline at Pro-14. The patent report does not provide the stereochemistry of the modified prolines. Post-translationally, the patent report does not describe whether the 2,3-didehydrobutyrine is the E- or Z-isomer. In several diagrams it is shown as the E-isomer.

Lanthionine-containing peptide antibiotic (lantibiotic) active on Gram-positive bacteria. The bactericidal activity of lantibiotics is based on depolarization of energized bacterial cytoplasmic membranes, initiated by the formation of aqueous transmembrane pores. In Microbispora sp. (strain 107891), this protein is Lantibiotic 107891.